Reading from the N-terminus, the 358-residue chain is Short chain dehydrogenase sor7 (358 aa).

The interval 1 to 22 (MSSPAIGQPPIPPTPTDANISG) is disordered. NADP(+) contacts are provided by leucine 34, aspartate 88, asparagine 115, tyrosine 206, lysine 210, valine 238, and threonine 240. Tyrosine 206 serves as the catalytic Proton donor. Lysine 210 acts as the Lowers pKa of active site Tyr in catalysis.

The protein belongs to the short-chain dehydrogenases/reductases (SDR) family.

The protein operates within secondary metabolite biosynthesis. Short chain dehydrogenase; part of the SOR gene cluster that mediates the biosynthesis of sorbicillinoids, a diverse group of yellow secondary metabolites that restrict growth of competing pathogenic fungi but not of bacteria. Sorbicillinoids biosynthesis requires the action of two PKSs. The SOR cluster is required for the production of trichodimerol and dihydrotrichotetronin, with sor2 being sufficient for production of trichodimerol, but not dihydrotrichotetronin in the light. Sor1 iteratively combines three acetyl units and the growing chain is modified by the ketoacyl reductase subunit, and optional by the enoyl reductase subunit in the second cycle. The polyketide is then handed over to the PKS sor2, which adds three more acetyl units, and two methyl groups. Sor2 releases an aldehyde, which undergoes spontaneous cyclization resulting in the formation of sorbicillin or 2',3'-dihydrosorbicillin. The monooxygenase sor5 oxidizes sorbicillin and 2',3'-dihydrosorbicillin to 2',3'-dihydrosorbicillinol and sorbicillinol, respectively. The oxidoreductase sor8 further converts sorbicillinol into oxosorbicillinol. Sorbicillinol is the building block for the other sorbicillinoids such as disorbicillinol, bisvertinolon, dihydrobisvertinolone, and dihydrotrichotetronine. This chain is Short chain dehydrogenase sor7, found in Hypocrea jecorina (strain QM6a) (Trichoderma reesei).